The chain runs to 71 residues: Sec-independent protein translocase protein TatA (71 aa).

Residues 1 to 21 (MGSFSIWHWLIVLVVVLLLFG) traverse the membrane as a helical segment. The segment at 47-71 (AEEAKTVEHRTDEPVGEVKQKASKS) is disordered. The span at 49 to 71 (EAKTVEHRTDEPVGEVKQKASKS) shows a compositional bias: basic and acidic residues.

The protein belongs to the TatA/E family. The Tat system comprises two distinct complexes: a TatABC complex, containing multiple copies of TatA, TatB and TatC subunits, and a separate TatA complex, containing only TatA subunits. Substrates initially bind to the TatABC complex, which probably triggers association of the separate TatA complex to form the active translocon.

The protein localises to the cell inner membrane. In terms of biological role, part of the twin-arginine translocation (Tat) system that transports large folded proteins containing a characteristic twin-arginine motif in their signal peptide across membranes. TatA could form the protein-conducting channel of the Tat system. The sequence is that of Sec-independent protein translocase protein TatA from Chelativorans sp. (strain BNC1).